The sequence spans 1038 residues: Protein argonaute 1D (1038 aa).

Disordered regions lie at residues 1–58 (MGSR…GAAP) and 110–134 (APHE…PRSL). 2 stretches are compositionally biased toward gly residues: residues 18 to 29 (RGGGRGGGGRGR) and 43 to 52 (GHGGRGGAGY). The span at 115–134 (PANVSSPEAASPEASSPRSL) shows a compositional bias: low complexity. The PAZ domain occupies 380–493 (PVIDFVIQLL…LPMEVCKIVE (114 aa)). Residues 669-990 (LLIGLLPDNN…AAFRARFYME (322 aa)) enclose the Piwi domain. The disordered stretch occupies residues 992–1021 (DSSDSGSMASGRGGGSSTSRSTRAAGGGAV).

The protein belongs to the argonaute family. Ago subfamily.

In terms of biological role, probably involved in the RNA silencing pathway. May bind to short RNAs such as microRNAs (miRNAs) or short interfering RNAs (siRNAs), and represses the translation of mRNAs which are complementary to them. This chain is Protein argonaute 1D (AGO1D), found in Oryza sativa subsp. japonica (Rice).